Here is a 608-residue protein sequence, read N- to C-terminus: Alpha-1,3-galactosidase A (608 aa).

The first 21 residues, 1 to 21 (MQRRTFIKSISAMMATSTTLG), serve as a signal peptide directing secretion. The N-palmitoyl cysteine moiety is linked to residue Cys22. A lipid anchor (S-diacylglycerol cysteine) is attached at Cys22. PbH1 repeat units follow at residues 262 to 292 (TKNT…KLDN), 318 to 340 (KGHV…NVHG), 426 to 448 (PDHV…LLTV), 449 to 470 (SGKI…KIGS), and 481 to 507 (VESV…DIVP).

The protein belongs to the glycosyl hydrolase 110 family. A subfamily.

The protein resides in the cell membrane. The enzyme catalyses Hydrolysis of terminal, non-reducing branched (1-&gt;3)-alpha-D-galactosidic residues, producing free D-galactose.. The catalysed reaction is Hydrolysis of terminal, non-reducing alpha-D-galactose residues in alpha-D-galactosides, including galactose oligosaccharides, galactomannans and galactolipids.. Its function is as follows. Alpha-galactosidase that specifically removes branched alpha-1,3-linked galactose residues present in blood group B antigens. Has no activity toward linear alpha-1,3-linked galactose residues. The chain is Alpha-1,3-galactosidase A (glaA) from Shewanella woodyi (strain ATCC 51908 / MS32).